The sequence spans 398 residues: uncharacterized protein (398 aa).

2 consecutive transmembrane segments (helical) span residues 31–51 and 56–76; these read VVFS…CLLF and AFIT…FFGC.

This sequence belongs to the chlamydial CPn_0129/CT_036/TC_0306 family.

It is found in the cell membrane. This is an uncharacterized protein from Chlamydia muridarum (strain MoPn / Nigg).